Reading from the N-terminus, the 245-residue chain is 1-(5-phosphoribosyl)-5-[(5-phosphoribosylamino)methylideneamino] imidazole-4-carboxamide isomerase (245 aa).

The active-site Proton acceptor is the D13. Catalysis depends on D132, which acts as the Proton donor.

It belongs to the HisA/HisF family.

It is found in the cytoplasm. The enzyme catalyses 1-(5-phospho-beta-D-ribosyl)-5-[(5-phospho-beta-D-ribosylamino)methylideneamino]imidazole-4-carboxamide = 5-[(5-phospho-1-deoxy-D-ribulos-1-ylimino)methylamino]-1-(5-phospho-beta-D-ribosyl)imidazole-4-carboxamide. The protein operates within amino-acid biosynthesis; L-histidine biosynthesis; L-histidine from 5-phospho-alpha-D-ribose 1-diphosphate: step 4/9. The protein is 1-(5-phosphoribosyl)-5-[(5-phosphoribosylamino)methylideneamino] imidazole-4-carboxamide isomerase of Frankia alni (strain DSM 45986 / CECT 9034 / ACN14a).